Here is a 568-residue protein sequence, read N- to C-terminus: DNA mismatch repair protein MutL (568 aa).

The protein belongs to the DNA mismatch repair MutL/HexB family.

This protein is involved in the repair of mismatches in DNA. It is required for dam-dependent methyl-directed DNA mismatch repair. May act as a 'molecular matchmaker', a protein that promotes the formation of a stable complex between two or more DNA-binding proteins in an ATP-dependent manner without itself being part of a final effector complex. This Nostoc punctiforme (strain ATCC 29133 / PCC 73102) protein is DNA mismatch repair protein MutL.